A 260-amino-acid polypeptide reads, in one-letter code: Coiled-coil domain-containing protein 172 (260 aa).

Residues 13-194 (SEHQAEESRR…FEDKKHEAIC (182 aa)) adopt a coiled-coil conformation.

The protein belongs to the CCDC172 family. May interact with TEKT2.

It localises to the cytoplasm. It is found in the cell projection. The protein resides in the cilium. In Bos taurus (Bovine), this protein is Coiled-coil domain-containing protein 172 (CCDC172).